We begin with the raw amino-acid sequence, 87 residues long: Exendin-4 (87 aa).

Positions 1–23 are cleaved as a signal peptide; that stretch reads MKIILWLCVFGLFLATLFPISWQ. The propeptide occupies 24–45; the sequence is MPVESGLSSEDSASSESFASKI. Ser86 is subject to Serine amide.

This sequence belongs to the glucagon family. Expressed by the venom gland.

It localises to the secreted. Its function is as follows. Venom protein that mimics the incretin hormone glucagon-like peptide 1 (GLP-1). It stimulates insulin synthesis and secretion, protects against beta-cell apoptosis in response to different insults, and promotes beta-cell proliferation It also promotes satiety, reduces food intake, reduces fat deposition, reduces body weight and inhibits gastric emptying. Interacts with GLP-1 receptor (GLP1R). Induces hypotension that is mediated by relaxation of cardiac smooth muscle. This is Exendin-4 from Heloderma suspectum cinctum (Banded Gila monster).